The following is a 417-amino-acid chain: Gamma-glutamyl phosphate reductase (417 aa).

This sequence belongs to the gamma-glutamyl phosphate reductase family.

It is found in the cytoplasm. The catalysed reaction is L-glutamate 5-semialdehyde + phosphate + NADP(+) = L-glutamyl 5-phosphate + NADPH + H(+). It participates in amino-acid biosynthesis; L-proline biosynthesis; L-glutamate 5-semialdehyde from L-glutamate: step 2/2. Catalyzes the NADPH-dependent reduction of L-glutamate 5-phosphate into L-glutamate 5-semialdehyde and phosphate. The product spontaneously undergoes cyclization to form 1-pyrroline-5-carboxylate. The chain is Gamma-glutamyl phosphate reductase from Photorhabdus laumondii subsp. laumondii (strain DSM 15139 / CIP 105565 / TT01) (Photorhabdus luminescens subsp. laumondii).